Consider the following 349-residue polypeptide: Cdc42 effector protein 4 (349 aa).

The residue at position 5 (lysine 5) is an N6-methyllysine. Serine 18 is modified (phosphoserine). Residues 27–41 (ISAPLGDFRHTMHVG) enclose the CRIB domain. Residues serine 64, serine 103, serine 107, and serine 116 each carry the phosphoserine modification. Residues 123-132 (KEAAEKDSSK) are compositionally biased toward basic and acidic residues. 3 disordered regions span residues 123–172 (KEAA…LLDE), 220–240 (QWGS…GPSS), and 278–349 (GWAV…EIRV). Serine 136, serine 138, serine 140, serine 154, serine 165, serine 223, serine 285, and serine 288 each carry phosphoserine. Residues 280–308 (AVVAPSPSSARSVGSHTTRDSSSLSSYTS) are compositionally biased toward low complexity. Positions 311–322 (LEERSPAFRGPD) are enriched in basic and acidic residues. Residues 338–349 (FMDEEEEDEIRV) show a composition bias toward acidic residues.

Belongs to the BORG/CEP family. Interacts with CDC42 and RHOQ, in a GTP-dependent manner. In terms of tissue distribution, ubiquitous.

The protein resides in the endomembrane system. The protein localises to the cytoplasm. It is found in the cytoskeleton. Probably involved in the organization of the actin cytoskeleton. May act downstream of CDC42 to induce actin filament assembly leading to cell shape changes. Induces pseudopodia formation, when overexpressed in fibroblasts. This Mus musculus (Mouse) protein is Cdc42 effector protein 4 (Cdc42ep4).